Consider the following 104-residue polypeptide: L-rhamnose mutarotase (104 aa).

Tyrosine 18 contributes to the substrate binding site. The active-site Proton donor is the histidine 22. Substrate is bound by residues tyrosine 41 and 76–77; that span reads WW.

It belongs to the rhamnose mutarotase family. In terms of assembly, homodimer.

The protein localises to the cytoplasm. It catalyses the reaction alpha-L-rhamnose = beta-L-rhamnose. It functions in the pathway carbohydrate metabolism; L-rhamnose metabolism. Its function is as follows. Involved in the anomeric conversion of L-rhamnose. This Burkholderia ambifaria (strain ATCC BAA-244 / DSM 16087 / CCUG 44356 / LMG 19182 / AMMD) (Burkholderia cepacia (strain AMMD)) protein is L-rhamnose mutarotase.